A 246-amino-acid polypeptide reads, in one-letter code: tRNA (guanine-N(1)-)-methyltransferase (246 aa).

S-adenosyl-L-methionine contacts are provided by residues Gly113 and 133–138 (IGDYVL).

This sequence belongs to the RNA methyltransferase TrmD family. Homodimer.

The protein localises to the cytoplasm. The catalysed reaction is guanosine(37) in tRNA + S-adenosyl-L-methionine = N(1)-methylguanosine(37) in tRNA + S-adenosyl-L-homocysteine + H(+). Its function is as follows. Specifically methylates guanosine-37 in various tRNAs. The protein is tRNA (guanine-N(1)-)-methyltransferase of Yersinia enterocolitica serotype O:8 / biotype 1B (strain NCTC 13174 / 8081).